The chain runs to 282 residues: Chlorite dismutase (282 aa).

The first 31 residues, 1-31 (MTNLSIHNFKLSLVAAVIGSAMVMTSSPVAA), serve as a signal peptide directing secretion. Position 104 (glutamate 104) interacts with Ca(2+). Histidine 204 is a heme binding site. Arginine 217 functions as the Proton acceptor in the catalytic mechanism. The Ca(2+) site is built by aspartate 226 and threonine 265.

Belongs to the chlorite dismutase family. Homopentamer. It depends on heme b as a cofactor.

Its subcellular location is the periplasm. It catalyses the reaction chloride + O2 = chlorite. Functionally, catalyzes the heme-dependent decomposition of chlorite to O(2) and chloride with high efficiency and specificity. Used to detoxify chlorite, a by-product of the reduction of perchlorate, a primarily anthropogenic pollutant, in perchlorate-respiring bacteria. This is Chlorite dismutase from Dechloromonas aromatica (strain RCB).